The sequence spans 79 residues: Beta-defensin 130 (79 aa).

A signal peptide spans 1 to 22 (MKLHSLISVLLLFVTLIPKGKT). Cystine bridges form between cysteine 38–cysteine 53 and cysteine 43–cysteine 60.

It belongs to the beta-defensin family.

It is found in the secreted. Functionally, antimicrobial host-defense peptide. In Pan troglodytes (Chimpanzee), this protein is Beta-defensin 130.